Here is a 162-residue protein sequence, read N- to C-terminus: NADH-quinone oxidoreductase subunit I (162 aa).

2 4Fe-4S ferredoxin-type domains span residues 52–82 (LRRYPNGEERCIACKLCEAICPAQAITIEAG) and 93–122 (VRYDIDMVKCIYCGLCQEACPVDAIVEGPN). 8 residues coordinate [4Fe-4S] cluster: cysteine 62, cysteine 65, cysteine 68, cysteine 72, cysteine 102, cysteine 105, cysteine 108, and cysteine 112.

The protein belongs to the complex I 23 kDa subunit family. In terms of assembly, NDH-1 is composed of 14 different subunits. Subunits NuoA, H, J, K, L, M, N constitute the membrane sector of the complex. It depends on [4Fe-4S] cluster as a cofactor.

Its subcellular location is the cell inner membrane. The catalysed reaction is a quinone + NADH + 5 H(+)(in) = a quinol + NAD(+) + 4 H(+)(out). In terms of biological role, NDH-1 shuttles electrons from NADH, via FMN and iron-sulfur (Fe-S) centers, to quinones in the respiratory chain. The immediate electron acceptor for the enzyme in this species is believed to be ubiquinone. Couples the redox reaction to proton translocation (for every two electrons transferred, four hydrogen ions are translocated across the cytoplasmic membrane), and thus conserves the redox energy in a proton gradient. This is NADH-quinone oxidoreductase subunit I from Afipia carboxidovorans (strain ATCC 49405 / DSM 1227 / KCTC 32145 / OM5) (Oligotropha carboxidovorans).